We begin with the raw amino-acid sequence, 275 residues long: MTLQQEIIQALGAKPHINPEEEIRRSVDFLKAYLETYPFLKSLVLGISGGQDSTLAGKLSQMAIAELREETGDNALQFIAVRLPYGVQADEQDCQDAIAFIQPDRVLTVNIKGAVLASEQALREAGIELSDFVRGNEKARERMKAQYSIAGMTHGVVVGTDHAAEAITGFFTKYGDGGTDINPLHRLNKRQGKQLLAALGCPEHLYKKVPTADLEDDRPSLPDEAALGVTYDNIDDYLEGKTLDPAIAKTIEGWYVKTEHKRRLPITVFDDFWKR.

46–53 is an ATP binding site; it reads GISGGQDS. Asp52 provides a ligand contact to Mg(2+). Residue Arg140 participates in deamido-NAD(+) binding. Thr160 is a binding site for ATP. Glu165 lines the Mg(2+) pocket. Deamido-NAD(+) is bound by residues Lys173 and Asp180. 2 residues coordinate ATP: Lys189 and Thr211. 260–261 is a binding site for deamido-NAD(+); sequence HK.

This sequence belongs to the NAD synthetase family. Homodimer.

It carries out the reaction deamido-NAD(+) + NH4(+) + ATP = AMP + diphosphate + NAD(+) + H(+). It participates in cofactor biosynthesis; NAD(+) biosynthesis; NAD(+) from deamido-NAD(+) (ammonia route): step 1/1. In terms of biological role, catalyzes the ATP-dependent amidation of deamido-NAD to form NAD. Uses ammonia as a nitrogen source. This chain is NH(3)-dependent NAD(+) synthetase, found in Salmonella enteritidis PT4 (strain P125109).